Reading from the N-terminus, the 241-residue chain is Phosphoadenosine 5'-phosphosulfate reductase (241 aa).

Residue cysteine 235 is the Nucleophile; cysteine thiosulfonate intermediate of the active site.

This sequence belongs to the PAPS reductase family. CysH subfamily.

It localises to the cytoplasm. The enzyme catalyses [thioredoxin]-disulfide + sulfite + adenosine 3',5'-bisphosphate + 2 H(+) = [thioredoxin]-dithiol + 3'-phosphoadenylyl sulfate. It functions in the pathway sulfur metabolism; hydrogen sulfide biosynthesis; sulfite from sulfate: step 3/3. Functionally, catalyzes the formation of sulfite from phosphoadenosine 5'-phosphosulfate (PAPS) using thioredoxin as an electron donor. In Xanthomonas oryzae pv. oryzae (strain MAFF 311018), this protein is Phosphoadenosine 5'-phosphosulfate reductase.